The primary structure comprises 1101 residues: MPKRTDLKSVLVIGSGPIVIGQAAEFDYSGTQAIRVLKEEGVRVVLVNSNPATIMTDPELADATYVEPITPAVVAKIIEKERPDALLPTLGGQTALNTAIALDKDGVLERFGVELIGANIEAIELGENRELFKGVVERAGGESARSHIVHTMEEALAAVEDLKYPVVVRPSFTMGGLGSGMAYDEADLYRICGAGLQYSPTSEVLLEESILGWKEYELEMMRDKNDNVVVVCSIENVDPVGVHTGDSITVAPAMTLTDREYQKLRDISINVIREVGVDTGGCNIQFAVNPVDGRVVVIEMNPRVSRSSALASKATGFAIAKIATKLALGYTMDEIPNDITQKTPASFEPVLDYVVVKVPRFAFEKFPAADPTLTTTMKSVGEAMAIGRNFTEALQKALRSLEQKGSELAFPQDADPQALLAAASTATTDRLSQTQQALYAGATIEEAFEATAIDPWFLDQFVLINEVADEIRDAEVLDEALLRRAKRHGFSDAQIGSLRHMDAAVVRGVRHALGVRPVYKTVDTCAAEFEAFTPYRYSSYDLETEVAPHEGESVIILGSGPNRIGQGIEFDYSCVHATMALREAGYETVMVNCNPETVSTDYDISDRLYFEPLTLEDVLEVIAAEEASGGVRGVFVQLGGQTPLKLAQQLADAGVPILGTSPAAIDLAEHRGEFALVLERAGLVAPKNGTAVSFDDAKRVADEIGYPVLVRPSYVLGGRGMEIVYSEEALAHYVAHATEITPDQPMLVDRFLEDAIEIDVDALYDGTELYLGGVMEHIEEAGIHSGDSACVLPPVTLGPDVLERVHRATERIAAGVGVRGLINIQFALASDVLYVIEANPRASRTVPFVSKATGVQLAKAAARIGVGESIADLRAAGMLPTAYDGGTLPIGAPVAVKEAVLPFTRFRTAEGRVVDSLLGPEMRSTGEVMGIDKHFDTAFAKSQSAAGGPLPTSGRVFVSVANRDKRTLVGQAKRLVDLGFQVVSTGGTAEVLRRNGIPAEVVAKIADAGHEDGAGTVLEQLHAGTVDLVLNTPSGGDARTDGYEIRAAATSLGVPVITTTAEFGACLQAIEAMRSYEWSVTSLQEHDARLQQAVAGPEAAA.

Positions 1–402 (MPKRTDLKSV…ALQKALRSLE (402 aa)) are carboxyphosphate synthetic domain. ATP is bound by residues R129, R169, G175, G176, E208, I210, E215, G241, V242, H243, Q285, and E299. Residues 133–328 (KGVVERAGGE…IAKIATKLAL (196 aa)) enclose the ATP-grasp 1 domain. Q285, E299, and N301 together coordinate Mg(2+). Mn(2+) is bound by residues Q285, E299, and N301. The tract at residues 403-544 (QKGSELAFPQ…YRYSSYDLET (142 aa)) is oligomerization domain. Residues 545–947 (EVAPHEGESV…AFAKSQSAAG (403 aa)) form a carbamoyl phosphate synthetic domain region. In terms of domain architecture, ATP-grasp 2 spans 675–866 (ALVLERAGLV…LAKAAARIGV (192 aa)). 10 residues coordinate ATP: R711, R750, L752, E757, G782, I783, H784, S785, Q825, and E837. Residues Q825, E837, and N839 each contribute to the Mg(2+) site. Mn(2+)-binding residues include Q825, E837, and N839. An MGS-like domain is found at 948-1093 (GPLPTSGRVF…QEHDARLQQA (146 aa)). The tract at residues 948-1101 (GPLPTSGRVF…QAVAGPEAAA (154 aa)) is allosteric domain.

Belongs to the CarB family. Composed of two chains; the small (or glutamine) chain promotes the hydrolysis of glutamine to ammonia, which is used by the large (or ammonia) chain to synthesize carbamoyl phosphate. Tetramer of heterodimers (alpha,beta)4. Requires Mg(2+) as cofactor. Mn(2+) serves as cofactor.

It catalyses the reaction hydrogencarbonate + L-glutamine + 2 ATP + H2O = carbamoyl phosphate + L-glutamate + 2 ADP + phosphate + 2 H(+). The catalysed reaction is hydrogencarbonate + NH4(+) + 2 ATP = carbamoyl phosphate + 2 ADP + phosphate + 2 H(+). The protein operates within amino-acid biosynthesis; L-arginine biosynthesis; carbamoyl phosphate from bicarbonate: step 1/1. It participates in pyrimidine metabolism; UMP biosynthesis via de novo pathway; (S)-dihydroorotate from bicarbonate: step 1/3. In terms of biological role, large subunit of the glutamine-dependent carbamoyl phosphate synthetase (CPSase). CPSase catalyzes the formation of carbamoyl phosphate from the ammonia moiety of glutamine, carbonate, and phosphate donated by ATP, constituting the first step of 2 biosynthetic pathways, one leading to arginine and/or urea and the other to pyrimidine nucleotides. The large subunit (synthetase) binds the substrates ammonia (free or transferred from glutamine from the small subunit), hydrogencarbonate and ATP and carries out an ATP-coupled ligase reaction, activating hydrogencarbonate by forming carboxy phosphate which reacts with ammonia to form carbamoyl phosphate. The sequence is that of Carbamoyl phosphate synthase large chain from Micrococcus luteus (strain ATCC 4698 / DSM 20030 / JCM 1464 / CCM 169 / CCUG 5858 / IAM 1056 / NBRC 3333 / NCIMB 9278 / NCTC 2665 / VKM Ac-2230) (Micrococcus lysodeikticus).